Consider the following 385-residue polypeptide: Tryptophan--tRNA ligase (385 aa).

The short motif at 82-90 (PSGPMHIGH) is the 'HIGH' region element. Residues 253-257 (KMSAS) carry the 'KMSKS' region motif.

It belongs to the class-I aminoacyl-tRNA synthetase family.

The protein localises to the cytoplasm. The catalysed reaction is tRNA(Trp) + L-tryptophan + ATP = L-tryptophyl-tRNA(Trp) + AMP + diphosphate + H(+). This chain is Tryptophan--tRNA ligase, found in Pyrococcus furiosus (strain ATCC 43587 / DSM 3638 / JCM 8422 / Vc1).